The chain runs to 206 residues: Mediator of RNA polymerase II transcription subunit 19 (206 aa).

The segment at 171-206 (GTGTKTKKRKYKSNGSSMASPNTELQPDDMKRRRLE) is disordered. The span at 183–195 (SNGSSMASPNTEL) shows a compositional bias: polar residues.

This sequence belongs to the Mediator complex subunit 19 family. As to quaternary structure, component of the Mediator complex.

It localises to the nucleus. Functionally, component of the Mediator complex, a coactivator involved in the regulated transcription of nearly all RNA polymerase II-dependent genes. Mediator functions as a bridge to convey information from gene-specific regulatory proteins to the basal RNA polymerase II transcription machinery. Mediator is recruited to promoters by direct interactions with regulatory proteins and serves as a scaffold for the assembly of a functional preinitiation complex with RNA polymerase II and the general transcription factors. The sequence is that of Mediator of RNA polymerase II transcription subunit 19 (ROX3) from Kluyveromyces lactis (strain ATCC 8585 / CBS 2359 / DSM 70799 / NBRC 1267 / NRRL Y-1140 / WM37) (Yeast).